We begin with the raw amino-acid sequence, 78 residues long: Large ribosomal subunit protein bL28 (78 aa).

Belongs to the bacterial ribosomal protein bL28 family.

The polypeptide is Large ribosomal subunit protein bL28 (Hydrogenovibrio crunogenus (strain DSM 25203 / XCL-2) (Thiomicrospira crunogena)).